The sequence spans 147 residues: Large ribosomal subunit protein bL9 (147 aa).

Belongs to the bacterial ribosomal protein bL9 family.

Functionally, binds to the 23S rRNA. This is Large ribosomal subunit protein bL9 from Thermoanaerobacter pseudethanolicus (strain ATCC 33223 / 39E) (Clostridium thermohydrosulfuricum).